Reading from the N-terminus, the 424-residue chain is Histidine--tRNA ligase (424 aa).

This sequence belongs to the class-II aminoacyl-tRNA synthetase family. In terms of assembly, homodimer.

Its subcellular location is the cytoplasm. The catalysed reaction is tRNA(His) + L-histidine + ATP = L-histidyl-tRNA(His) + AMP + diphosphate + H(+). The sequence is that of Histidine--tRNA ligase from Shewanella amazonensis (strain ATCC BAA-1098 / SB2B).